The sequence spans 125 residues: Large ribosomal subunit protein bL12 (125 aa).

The protein belongs to the bacterial ribosomal protein bL12 family. Homodimer. Part of the ribosomal stalk of the 50S ribosomal subunit. Forms a multimeric L10(L12)X complex, where L10 forms an elongated spine to which 2 to 4 L12 dimers bind in a sequential fashion. Binds GTP-bound translation factors.

Functionally, forms part of the ribosomal stalk which helps the ribosome interact with GTP-bound translation factors. Is thus essential for accurate translation. In Variovorax paradoxus (strain S110), this protein is Large ribosomal subunit protein bL12.